Reading from the N-terminus, the 630-residue chain is Very-long-chain aldehyde decarbonylase GL1-7 (630 aa).

Transmembrane regions (helical) follow at residues 93 to 113, 126 to 146, 185 to 205, and 325 to 345; these read LYLD…YAII, GALI…YWFH, FLLF…SVLA, and VWYM…AWIY. Positions 133 to 272 constitute a Fatty acid hydroxylase domain; that stretch reads LHMGPVEFLY…MPFYDYIYNT (140 aa).

It belongs to the sterol desaturase family. Homodimer. Expressed in panicles at low levels.

The protein resides in the endoplasmic reticulum membrane. The catalysed reaction is a long-chain fatty aldehyde + 2 NADPH + O2 + H(+) = a long-chain alkane + formate + 2 NADP(+) + H2O. In terms of biological role, aldehyde decarbonylase involved in the conversion of aldehydes to alkanes. Core component of a very-long-chain alkane synthesis complex. The chain is Very-long-chain aldehyde decarbonylase GL1-7 from Oryza sativa subsp. japonica (Rice).